Reading from the N-terminus, the 509-residue chain is DNA primase DnaG (509 aa).

The Toprim domain occupies 167–253 (DAIVVVEGRA…CVEDLARHEV (87 aa)). Mg(2+)-binding residues include Glu-173, Asp-215, and Asp-217. A disordered region spans residues 267–411 (KQAASDDADP…ASTDEQPKTL (145 aa)). Composition is skewed to low complexity over residues 313 to 331 (PVSSPESPAESPAADETAA) and 383 to 402 (ESTAAEAPESSADGPAAAGA).

Belongs to the archaeal DnaG primase family. In terms of assembly, forms a ternary complex with MCM helicase and DNA. It depends on Mg(2+) as a cofactor.

It carries out the reaction ssDNA + n NTP = ssDNA/pppN(pN)n-1 hybrid + (n-1) diphosphate.. RNA polymerase that catalyzes the synthesis of short RNA molecules used as primers for DNA polymerase during DNA replication. In Natronomonas pharaonis (strain ATCC 35678 / DSM 2160 / CIP 103997 / JCM 8858 / NBRC 14720 / NCIMB 2260 / Gabara) (Halobacterium pharaonis), this protein is DNA primase DnaG.